The sequence spans 243 residues: Type III pantothenate kinase (243 aa).

Position 7–14 (7–14 (DIGNTRLK)) interacts with ATP. Substrate-binding positions include Tyr95 and 102–105 (GIDR). Asp104 functions as the Proton acceptor in the catalytic mechanism. Thr126 serves as a coordination point for ATP. Substrate is bound at residue Thr177.

This sequence belongs to the type III pantothenate kinase family. In terms of assembly, homodimer. NH4(+) serves as cofactor. Requires K(+) as cofactor.

The protein localises to the cytoplasm. The enzyme catalyses (R)-pantothenate + ATP = (R)-4'-phosphopantothenate + ADP + H(+). It functions in the pathway cofactor biosynthesis; coenzyme A biosynthesis; CoA from (R)-pantothenate: step 1/5. Functionally, catalyzes the phosphorylation of pantothenate (Pan), the first step in CoA biosynthesis. In Acinetobacter baylyi (strain ATCC 33305 / BD413 / ADP1), this protein is Type III pantothenate kinase.